The sequence spans 98 residues: NADH-ubiquinone oxidoreductase chain 4L (98 aa).

Helical transmembrane passes span 1 to 21 (MPFI…GLLI), 29 to 49 (SLLC…LMTL), and 61 to 81 (IVLL…LVLI).

This sequence belongs to the complex I subunit 4L family. In terms of assembly, core subunit of respiratory chain NADH dehydrogenase (Complex I) which is composed of 45 different subunits.

Its subcellular location is the mitochondrion inner membrane. The catalysed reaction is a ubiquinone + NADH + 5 H(+)(in) = a ubiquinol + NAD(+) + 4 H(+)(out). Its function is as follows. Core subunit of the mitochondrial membrane respiratory chain NADH dehydrogenase (Complex I) which catalyzes electron transfer from NADH through the respiratory chain, using ubiquinone as an electron acceptor. Part of the enzyme membrane arm which is embedded in the lipid bilayer and involved in proton translocation. The protein is NADH-ubiquinone oxidoreductase chain 4L (MT-ND4L) of Aotus trivirgatus (Three-striped night monkey).